The chain runs to 353 residues: Phospho-N-acetylmuramoyl-pentapeptide-transferase (353 aa).

Transmembrane regions (helical) follow at residues 22–42 (FAFFIALCLSLFLMPKFITWA), 65–85 (TPTMGGLIFISSAVIASLFCI), 88–108 (DNIFAISALLCLILFCLIGLI), 129–149 (LLAQIIAGLICILPLYFSSEL), 161–181 (PLFDMEIFAIVFWILVLISSS), 192–212 (GLATVPSIFSLSTLGIFLYLS), 228–248 (GLGEVVIICAALIGALMGFLW), 256–276 (VFMGDSGSLALGGFIGFLAII), 281–301 (ILLLLIGFVFVLETVSVILQV), and 330–350 (KIIVRFWMIALLSNLLALASI).

It belongs to the glycosyltransferase 4 family. MraY subfamily. Mg(2+) serves as cofactor.

It is found in the cell inner membrane. The catalysed reaction is UDP-N-acetyl-alpha-D-muramoyl-L-alanyl-gamma-D-glutamyl-meso-2,6-diaminopimeloyl-D-alanyl-D-alanine + di-trans,octa-cis-undecaprenyl phosphate = di-trans,octa-cis-undecaprenyl diphospho-N-acetyl-alpha-D-muramoyl-L-alanyl-D-glutamyl-meso-2,6-diaminopimeloyl-D-alanyl-D-alanine + UMP. The protein operates within cell wall biogenesis; peptidoglycan biosynthesis. Functionally, catalyzes the initial step of the lipid cycle reactions in the biosynthesis of the cell wall peptidoglycan: transfers peptidoglycan precursor phospho-MurNAc-pentapeptide from UDP-MurNAc-pentapeptide onto the lipid carrier undecaprenyl phosphate, yielding undecaprenyl-pyrophosphoryl-MurNAc-pentapeptide, known as lipid I. In Campylobacter jejuni subsp. jejuni serotype O:6 (strain 81116 / NCTC 11828), this protein is Phospho-N-acetylmuramoyl-pentapeptide-transferase.